A 383-amino-acid chain; its full sequence is uncharacterized protein (383 aa).

This sequence belongs to the peptidase M20 family.

This is an uncharacterized protein from Staphylococcus aureus (strain N315).